Reading from the N-terminus, the 168-residue chain is G/U mismatch-specific DNA glycosylase (168 aa).

Belongs to the uracil-DNA glycosylase (UDG) superfamily. TDG/mug family. As to quaternary structure, binds DNA as a monomer.

The protein localises to the cytoplasm. It catalyses the reaction Specifically hydrolyzes mismatched double-stranded DNA and polynucleotides, releasing free uracil.. Its function is as follows. Excises ethenocytosine and uracil, which can arise by alkylation or deamination of cytosine, respectively, from the corresponding mispairs with guanine in ds-DNA. It is capable of hydrolyzing the carbon-nitrogen bond between the sugar-phosphate backbone of the DNA and the mispaired base. The complementary strand guanine functions in substrate recognition. Required for DNA damage lesion repair in stationary-phase cells. This is G/U mismatch-specific DNA glycosylase from Escherichia coli O9:H4 (strain HS).